Reading from the N-terminus, the 295-residue chain is G1/S-specific cyclin-D1 (295 aa).

Residues 28–152 (LRAMLKAEET…VLVNKLKWNL (125 aa)) enclose the Cyclin N-terminal domain. The interval 264 to 295 (QQNLDPKAAEEEEEEEEVDLACTPTDVRDVNI) is disordered. Residue lysine 270 forms a Glycyl lysine isopeptide (Lys-Gly) (interchain with G-Cter in ubiquitin) linkage. The span at 273-282 (EEEEEEEEVD) shows a compositional bias: acidic residues. Threonine 286 carries the post-translational modification Phosphothreonine.

The protein belongs to the cyclin family. Cyclin D subfamily. In terms of assembly, interacts with either CDK4 or CDK6 protein kinase to form a serine/threonine kinase holoenzyme complex. The cyclin subunit imparts substrate specificity to the complex. Component of the ternary complex CCND1/CDK4/CDKN1B required for nuclear translocation and modulation of CDK4-mediated kinase activity. Interacts directly with CDKN1B. Can form similar complexes with either CDKN1A or CDKN2A. Interacts with UHRF2; the interaction ubiquitinates CCND1 and appears to occur independently of phosphorylation. Interacts with USP2. Interacts (via cyclin N-terminal domain) with INSM1 (via N-terminal region); the interaction competes with the binding of CCND1 to CDK4 during cell cycle progression and inhibits CDK4 activity. Interacts with CDK4; the interaction is prevented with the binding of CCND1 to INSM1 during cell cycle progression. In terms of processing, phosphorylation at Thr-286 by MAP kinases is required for ubiquitination and degradation by the DCX(AMBRA1) complex. It also plays an essential role for recognition by the FBXO31 component of SCF (SKP1-cullin-F-box) protein ligase complex following DNA damage. Post-translationally, ubiquitinated at Lys-270 by the DCX(AMBRA1) complex during the transition from G1 to S cell phase, leading to its degradation: ubiquitination is dependent on Thr-286 phosphorylation. The DCX(AMBRA1) complex represents the major regulator of CCND1 stability during the G1/S transition. Also ubiquitinated by the SCF(FBXO4) and Cul7-RING(FBXW8) ubiquitin-protein ligase complexes. Following DNA damage it is ubiquitinated by the SCF(FBXO31) protein ligase complex. SCF(FBXO31) ubiquitination is dependent on Thr-286 phosphorylation. Ubiquitinated also by UHRF2 apparently in a phosphorylation-independent manner. Ubiquitination leads to its degradation and G1 arrest. Deubiquitinated by USP2; leading to its stabilization.

It localises to the nucleus. The protein resides in the cytoplasm. It is found in the nucleus membrane. Regulatory component of the cyclin D1-CDK4 (DC) complex that phosphorylates and inhibits members of the retinoblastoma (RB) protein family including RB1 and regulates the cell-cycle during G(1)/S transition. Phosphorylation of RB1 allows dissociation of the transcription factor E2F from the RB/E2F complex and the subsequent transcription of E2F target genes which are responsible for the progression through the G(1) phase. Hypophosphorylates RB1 in early G(1) phase. Cyclin D-CDK4 complexes are major integrators of various mitogenenic and antimitogenic signals. Also a substrate for SMAD3, phosphorylating SMAD3 in a cell-cycle-dependent manner and repressing its transcriptional activity. Component of the ternary complex, cyclin D1/CDK4/CDKN1B, required for nuclear translocation and activity of the cyclin D-CDK4 complex. Exhibits transcriptional corepressor activity with INSM1 on the NEUROD1 and INS promoters in a cell cycle-independent manner. This Bos taurus (Bovine) protein is G1/S-specific cyclin-D1 (CCND1).